The chain runs to 617 residues: MSPMARTAPVPAATDPAIIRNFCIIAHIDHGKSTLADRMLQYTGVVKQRDMKAQYLDRMDIERERGITIKSQAVRMPWELDGNSYALNMIDTPGHVDFTYEVSRSLAACEGAVLLVDAAQGIEAQTLANLYLAMENNLTIIPVLNKIDLPAAQPEKYAAELANLIGGDPEDVLKVSGKTGVGVEALLDKIVRDLPAPVGDPNAPARAMIFDSVYDTYRGVVTYVRVVDGMLHPRERIQMMSTRATHELLEIGVSSPEPTPSKGLGVGEVGYLITGVKDVRQSKVGDTVTNLAKPASESLSGYADAKPMVFSGLYPLDGTDYPVLRDALEKLMLNDAALVYEPETSAALGFGFRVGFLGLLHLEITRERLEREYNLDLISTAPNVEYEVTLEDKKVIHVTNPSEYPTGKISEVREPMVSATILAPNEFVGSIMELCQSRRGQMRGMDYLSEDRVELRYWIPLAEIVFDFFDLLKSKTRGYASLDWKADGEQVADLVKVDILLQGEQVDAFSAITHRDKAYAYGVMMTGKLRELIPRQQFEVPIQAAIGSRIIARESIRAIRKDVLAKCYGGDITRKRKLLEKQKEGKKRMKMVGRVEVPQEAFIAALTTDESKDKAKK.

Residues 17-198 (AIIRNFCIIA…KIVRDLPAPV (182 aa)) form the tr-type G domain. GTP contacts are provided by residues 29–34 (DHGKST) and 145–148 (NKID).

This sequence belongs to the TRAFAC class translation factor GTPase superfamily. Classic translation factor GTPase family. LepA subfamily.

Its subcellular location is the cell membrane. It carries out the reaction GTP + H2O = GDP + phosphate + H(+). Required for accurate and efficient protein synthesis under certain stress conditions. May act as a fidelity factor of the translation reaction, by catalyzing a one-codon backward translocation of tRNAs on improperly translocated ribosomes. Back-translocation proceeds from a post-translocation (POST) complex to a pre-translocation (PRE) complex, thus giving elongation factor G a second chance to translocate the tRNAs correctly. Binds to ribosomes in a GTP-dependent manner. The polypeptide is Elongation factor 4 (Paenarthrobacter aurescens (strain TC1)).